Consider the following 349-residue polypeptide: Methylthioribose-1-phosphate isomerase (349 aa).

Substrate contacts are provided by residues 51-53, arginine 94, and glutamine 199; that span reads RGA. The active-site Proton donor is aspartate 240. 250 to 251 is a binding site for substrate; it reads NK.

It belongs to the EIF-2B alpha/beta/delta subunits family. MtnA subfamily. Homodimer.

It catalyses the reaction 5-(methylsulfanyl)-alpha-D-ribose 1-phosphate = 5-(methylsulfanyl)-D-ribulose 1-phosphate. Its pathway is amino-acid biosynthesis; L-methionine biosynthesis via salvage pathway; L-methionine from S-methyl-5-thio-alpha-D-ribose 1-phosphate: step 1/6. Its function is as follows. Catalyzes the interconversion of methylthioribose-1-phosphate (MTR-1-P) into methylthioribulose-1-phosphate (MTRu-1-P). This is Methylthioribose-1-phosphate isomerase from Bacillus mycoides (strain KBAB4) (Bacillus weihenstephanensis).